We begin with the raw amino-acid sequence, 2936 residues long: Neurobeachin (2936 aa).

The tract at residues 961–985 (ENIKKGKKGNVSTISGLSSQTAGAK) is disordered. The span at 970 to 982 (NVSTISGLSSQTA) shows a compositional bias: polar residues. Phosphoserine is present on residues S1001 and S1004. 2 stretches are compositionally biased toward polar residues: residues 1203-1220 (TSDGVSSVSERELASSTK) and 1231-1241 (TLETESSNSKA). 3 disordered regions span residues 1203–1222 (TSDGVSSVSERELASSTKGL), 1231–1265 (TLETESSNSKAVPNVDAGSIISDTERSDDGKESGK), and 1270–1289 (IQTTATTQAVQGRSSTQQDR). A compositionally biased stretch (basic and acidic residues) spans 1253–1265 (DTERSDDGKESGK). The segment covering 1270–1286 (IQTTATTQAVQGRSSTQ) has biased composition (polar residues). The stretch at 1316–1358 (TTMFRIPEFKWSPMHQRLLTDLLFALETDVHVWRSHSTKSVMD) is one WD 1 repeat. 4 disordered regions span residues 1480 to 1521 (QRDR…LSPI), 1639 to 1667 (PDTVKEKETPTPGEDIQLESSVPHTDSGM), 1701 to 1721 (VKKSQESLTEHPSEMLKPAPS), and 1830 to 1850 (TGAVDSGSSSSSSSSSFVNGA). A Phosphoserine modification is found at S1519. A compositionally biased stretch (basic and acidic residues) spans 1701–1714 (VKKSQESLTEHPSE). Phosphoserine is present on residues S1704 and S1707. Positions 1835–1845 (SGSSSSSSSSS) are enriched in low complexity. Residue S2128 is modified to Phosphoserine. One can recognise a BEACH-type PH domain in the interval 2137-2245 (NLAGPVVLST…TVKKVVYSLP (109 aa)). The region spanning 2264 to 2553 (ATPRQLYKSS…QLLIEPHPPR (290 aa)) is the BEACH domain. Position 2565 is a phosphoserine (S2565). WD repeat units lie at residues 2708-2751 (GHWD…HIIG), 2768-2808 (GHDH…RALE), 2850-2889 (EINDSTRAILLSSDGQNLVTGGDNGVVEVWQACDFKQLYI), and 2892-2931 (GCDAGIRAMDLSHDQRTLITGMASGSIVAFNIDFNRWHYE).

This sequence belongs to the WD repeat neurobeachin family. Interacts with RII subunit of PKA. Forebrain, brainstem and cerebellum.

It localises to the membrane. Its subcellular location is the endomembrane system. The protein resides in the postsynaptic cell membrane. Its function is as follows. Binds to type II regulatory subunits of protein kinase A and anchors/targets them to the membrane. May anchor the kinase to cytoskeletal and/or organelle-associated proteins. May have a role in membrane trafficking. The sequence is that of Neurobeachin (Nbea) from Mus musculus (Mouse).